A 224-amino-acid polypeptide reads, in one-letter code: Deoxyribose-phosphate aldolase (224 aa).

The active-site Proton donor/acceptor is the aspartate 98. Lysine 159 (schiff-base intermediate with acetaldehyde) is an active-site residue. The active-site Proton donor/acceptor is lysine 189.

The protein belongs to the DeoC/FbaB aldolase family. DeoC type 1 subfamily.

Its subcellular location is the cytoplasm. The catalysed reaction is 2-deoxy-D-ribose 5-phosphate = D-glyceraldehyde 3-phosphate + acetaldehyde. It functions in the pathway carbohydrate degradation; 2-deoxy-D-ribose 1-phosphate degradation; D-glyceraldehyde 3-phosphate and acetaldehyde from 2-deoxy-alpha-D-ribose 1-phosphate: step 2/2. In terms of biological role, catalyzes a reversible aldol reaction between acetaldehyde and D-glyceraldehyde 3-phosphate to generate 2-deoxy-D-ribose 5-phosphate. This is Deoxyribose-phosphate aldolase from Methanothermobacter thermautotrophicus (strain ATCC 29096 / DSM 1053 / JCM 10044 / NBRC 100330 / Delta H) (Methanobacterium thermoautotrophicum).